The sequence spans 330 residues: Biotin synthase (330 aa).

Positions 43–272 (FMGDKFDTCS…RAFLRFSGGR (230 aa)) constitute a Radical SAM core domain. Residues cysteine 61, cysteine 65, and cysteine 68 each contribute to the [4Fe-4S] cluster site. [2Fe-2S] cluster is bound by residues serine 105, cysteine 137, cysteine 197, and arginine 267.

It belongs to the radical SAM superfamily. Biotin synthase family. In terms of assembly, homodimer. [4Fe-4S] cluster is required as a cofactor. It depends on [2Fe-2S] cluster as a cofactor.

It carries out the reaction (4R,5S)-dethiobiotin + (sulfur carrier)-SH + 2 reduced [2Fe-2S]-[ferredoxin] + 2 S-adenosyl-L-methionine = (sulfur carrier)-H + biotin + 2 5'-deoxyadenosine + 2 L-methionine + 2 oxidized [2Fe-2S]-[ferredoxin]. It participates in cofactor biosynthesis; biotin biosynthesis; biotin from 7,8-diaminononanoate: step 2/2. Its function is as follows. Catalyzes the conversion of dethiobiotin (DTB) to biotin by the insertion of a sulfur atom into dethiobiotin via a radical-based mechanism. This is Biotin synthase from Porphyromonas gingivalis (strain ATCC 33277 / DSM 20709 / CIP 103683 / JCM 12257 / NCTC 11834 / 2561).